A 662-amino-acid chain; its full sequence is Hypoxia-inducible factor 3-alpha (662 aa).

The interval 1-25 (MDWDQDRSNTELRKEKSRDAARSRR) is disordered. Residues 12–65 (LRKEKSRDAARSRRSQETEVLYQLAHTLPFARGVSAHLDKASIMRLTISYLRMH) form the bHLH domain. The interval 75 to 98 (QVEKGGEPLDACYLKALEGFVMVL) is nuclear localization signal (isoform 2). PAS domains lie at 80–150 (GEPL…PNLS) and 225–295 (PHPA…LSKG). A nuclear export signal (isoform 2) region spans residues 228-272 (ASLEPPLGRGAFLSRHSLDMKFTYCDERIAEVAGYSPDDLIGCSA). 2 disordered regions span residues 352 to 377 (EQTE…GNSV) and 416 to 446 (PILD…DLPD). Positions 414 to 418 (MAPIL) match the LRRLL motif. The span at 426 to 437 (TPSTPQATRRPQ) shows a compositional bias: low complexity. Residues 448–581 (LTVGLENAHR…SEDKGLELLE (134 aa)) form an ODD region. An NTAD region spans residues 450–501 (VGLENAHRLSTAQKNKTVETDLDIAQDPDTLDLEMLAPYISMDDDFQLNSSE). Lys-463 is covalently cross-linked (Glycyl lysine isopeptide (Lys-Gly) (interchain with G-Cter in ubiquitin)). The LAPYISMD motif lies at 485 to 492 (LAPYISMD). Pro-487 carries the 4-hydroxyproline modification. The interval 500 to 595 (SEQLPKVHRR…KRSPRLEPGS (96 aa)) is disordered. The span at 505–521 (KVHRRPPRVARRPRARS) shows a compositional bias: basic residues. Lys-565 participates in a covalent cross-link: Glycyl lysine isopeptide (Lys-Gly) (interchain with G-Cter in ubiquitin). A compositionally biased stretch (basic and acidic residues) spans 572–584 (SEDKGLELLETKP).

As to quaternary structure, isoform 1 interacts with ARNT. Isoform 2 interacts with HIF1A. Isoform 2 interacts EPAS1. Isoform 2 interacts (via C-terminus domain) with BAD; the interaction reduces the binding between BAD and BAX. Isoform 2 (via C-terminus domain) interacts with BCL2L2 and MCL1. Interacts with VHL. Post-translationally, in normoxia, hydroxylated on Pro-487 in the oxygen-dependent degradation domain (ODD) by PHD. The hydroxylated proline promotes interaction with VHL, initiating rapid ubiquitination and subsequent proteasomal degradation. Ubiquitinated; ubiquitination occurs in a VHL- and oxygen-dependent pathway and subsequently targeted for proteasomal degradation. As to expression, isoform 3 is expressed in endothelial cells of vessels and capillaries in alveoli of the neonatal lung (at protein level). Expressed in lung, brain, heart and kidney. Isoform 2 is expressed in heart and lung. Isoform 2 is highly expressed in the epithelial cell layer of the cornea with lower expression in the layers of ganglion cells, inner nuclear cells, and rods and cones of the retina. Isoform 2 is expressed in the cerebellum only in the Purkinje cell layer.

The protein localises to the nucleus. It localises to the cytoplasm. It is found in the nucleus speckle. The protein resides in the mitochondrion. In terms of biological role, acts as a transcriptional regulator in adaptive response to low oxygen tension. Acts as a regulator of hypoxia-inducible gene expression. Plays a role in the development of the cardiorespiratory system. Functionally, acts as a positive regulator of hypoxia-inducible gene expression. Associates to core DNA sequence 5'-TACGTG-3' within the hypoxia response element (HRE) of target gene promoters in a ARNT-dependent manner, and hence also participates in the transcriptional activation of reporter genes driven by HRE. Its function is as follows. Attenuates the ability of transcription factor HIF1A, EPAS1 and the HIF1A-ARNT complex to bind to hypoxia-responsive elements (HRE) located within the enhancer/promoter of hypoxia-inducible target genes and hence inhibits HRE-driven transcriptional activation. Functions as an inhibitor of angiogenesis in hypoxic cells of the cornea. May act as a tumor suppressor. May also be involved in apoptosis. Attenuates the ability of transcription factor HIF1A, EPAS1 and the HIF1A-ARNT complex to bind to hypoxia-responsive elements (HRE) located within the enhancer/promoter of hypoxia-inducible target genes and hence inhibits HRE-driven transcriptional activation. Also plays a role in the development of the lung and heart during embryonic and neonatal stages. In Mus musculus (Mouse), this protein is Hypoxia-inducible factor 3-alpha.